The primary structure comprises 434 residues: Glutamyl-tRNA reductase (434 aa).

Substrate is bound by residues 49–52 (TCNR), Ser-109, 114–116 (EPQ), and Gln-120. The active-site Nucleophile is the Cys-50. 189 to 194 (GAGEMC) provides a ligand contact to NADP(+).

Belongs to the glutamyl-tRNA reductase family. Homodimer.

It catalyses the reaction (S)-4-amino-5-oxopentanoate + tRNA(Glu) + NADP(+) = L-glutamyl-tRNA(Glu) + NADPH + H(+). It functions in the pathway porphyrin-containing compound metabolism; protoporphyrin-IX biosynthesis; 5-aminolevulinate from L-glutamyl-tRNA(Glu): step 1/2. Its function is as follows. Catalyzes the NADPH-dependent reduction of glutamyl-tRNA(Glu) to glutamate 1-semialdehyde (GSA). The sequence is that of Glutamyl-tRNA reductase from Citrifermentans bemidjiense (strain ATCC BAA-1014 / DSM 16622 / JCM 12645 / Bem) (Geobacter bemidjiensis).